The following is a 308-amino-acid chain: Glutamyl-Q tRNA(Asp) synthetase (308 aa).

Residues 19–23 and E55 each bind L-glutamate; that span reads RFAPS. The short motif at 22-32 is the 'HIGH' region element; sequence PSPSGELHFGS. Residues C111, C113, Y125, and C129 each coordinate Zn(2+). The L-glutamate site is built by Y182 and R200. The short motif at 238–242 is the 'KMSKS' region element; the sequence is KLSKQ. K241 serves as a coordination point for ATP.

Belongs to the class-I aminoacyl-tRNA synthetase family. GluQ subfamily. Requires Zn(2+) as cofactor.

Catalyzes the tRNA-independent activation of glutamate in presence of ATP and the subsequent transfer of glutamate onto a tRNA(Asp). Glutamate is transferred on the 2-amino-5-(4,5-dihydroxy-2-cyclopenten-1-yl) moiety of the queuosine in the wobble position of the QUC anticodon. The protein is Glutamyl-Q tRNA(Asp) synthetase of Escherichia coli O157:H7.